The chain runs to 147 residues: UPF0306 protein YhbP (147 aa).

The protein belongs to the UPF0306 family.

This is UPF0306 protein YhbP from Salmonella arizonae (strain ATCC BAA-731 / CDC346-86 / RSK2980).